Consider the following 407-residue polypeptide: Na(+)-translocating NADH-quinone reductase subunit F (407 aa).

Residues 6 to 26 (IFLAIGMFTAIVLGLVAIILV) form a helical membrane-spanning segment. The 2Fe-2S ferredoxin-type domain maps to 35 to 127 (GDVTIQINGE…DMQIRVPEEV (93 aa)). The [2Fe-2S] cluster site is built by Cys70, Cys76, Cys79, and Cys111. The FAD-binding FR-type domain maps to 130–269 (VKKWECTVES…YGPFGEFFAK (140 aa)).

It belongs to the NqrF family. In terms of assembly, composed of six subunits; NqrA, NqrB, NqrC, NqrD, NqrE and NqrF. [2Fe-2S] cluster serves as cofactor. FAD is required as a cofactor.

Its subcellular location is the cell inner membrane. The enzyme catalyses a ubiquinone + n Na(+)(in) + NADH + H(+) = a ubiquinol + n Na(+)(out) + NAD(+). In terms of biological role, NQR complex catalyzes the reduction of ubiquinone-1 to ubiquinol by two successive reactions, coupled with the transport of Na(+) ions from the cytoplasm to the periplasm. The first step is catalyzed by NqrF, which accepts electrons from NADH and reduces ubiquinone-1 to ubisemiquinone by a one-electron transfer pathway. In Pseudomonas aeruginosa (strain UCBPP-PA14), this protein is Na(+)-translocating NADH-quinone reductase subunit F.